The chain runs to 161 residues: Cyclic pyranopterin monophosphate synthase (161 aa).

Residues 73–75 and 110–111 contribute to the substrate site; these read LCH and ME. Asp-125 is an active-site residue.

Belongs to the MoaC family. Homohexamer; trimer of dimers.

The catalysed reaction is (8S)-3',8-cyclo-7,8-dihydroguanosine 5'-triphosphate = cyclic pyranopterin phosphate + diphosphate. The protein operates within cofactor biosynthesis; molybdopterin biosynthesis. In terms of biological role, catalyzes the conversion of (8S)-3',8-cyclo-7,8-dihydroguanosine 5'-triphosphate to cyclic pyranopterin monophosphate (cPMP). This chain is Cyclic pyranopterin monophosphate synthase, found in Pseudomonas syringae pv. syringae (strain B728a).